We begin with the raw amino-acid sequence, 66 residues long: Large ribosomal subunit protein bL32 (66 aa).

Positions Met1–Gln19 are enriched in basic residues. The disordered stretch occupies residues Met1 to Trp20.

The protein belongs to the bacterial ribosomal protein bL32 family.

The polypeptide is Large ribosomal subunit protein bL32 (Beutenbergia cavernae (strain ATCC BAA-8 / DSM 12333 / CCUG 43141 / JCM 11478 / NBRC 16432 / NCIMB 13614 / HKI 0122)).